Reading from the N-terminus, the 218-residue chain is Adenylate kinase (218 aa).

10–15 (GAGKGT) provides a ligand contact to ATP. Residues 30–59 (STGDMLRAAIAKGTPLGLSAQKIMESGGLV) form an NMP region. AMP is bound by residues Thr-31, Arg-36, 57 to 59 (GLV), 85 to 88 (GFPR), and Gln-92. An LID region spans residues 122 to 159 (GRRIHQPSGRVYHVVNQPPKNPGVDDITGEPLIQRDDD). Residues Arg-123 and 132-133 (VY) contribute to the ATP site. 2 residues coordinate AMP: Arg-156 and Arg-167. ATP is bound at residue Gly-203.

The protein belongs to the adenylate kinase family. In terms of assembly, monomer.

Its subcellular location is the cytoplasm. It carries out the reaction AMP + ATP = 2 ADP. Its pathway is purine metabolism; AMP biosynthesis via salvage pathway; AMP from ADP: step 1/1. In terms of biological role, catalyzes the reversible transfer of the terminal phosphate group between ATP and AMP. Plays an important role in cellular energy homeostasis and in adenine nucleotide metabolism. The sequence is that of Adenylate kinase from Legionella pneumophila (strain Corby).